We begin with the raw amino-acid sequence, 187 residues long: Intermembrane transport lipoprotein PqiC (187 aa).

Positions 1–15 (MKKWLVTIAALWLAG) are cleaved as a signal peptide. Cys16 carries the N-palmitoyl cysteine lipid modification. Cys16 carries the S-diacylglycerol cysteine lipid modification.

In terms of assembly, may form a complex composed of PqiA, PqiB and PqiC. Interacts with PqiB.

The protein resides in the cell outer membrane. In terms of biological role, component of a transport pathway that contributes to membrane integrity. The polypeptide is Intermembrane transport lipoprotein PqiC (Escherichia coli (strain K12)).